Here is a 366-residue protein sequence, read N- to C-terminus: Fructose-bisphosphate aldolase 2 (366 aa).

2 residues coordinate substrate: R60 and K150. The Proton acceptor role is filled by E191. K233 functions as the Schiff-base intermediate with dihydroxyacetone-P in the catalytic mechanism.

It belongs to the class I fructose-bisphosphate aldolase family.

The catalysed reaction is beta-D-fructose 1,6-bisphosphate = D-glyceraldehyde 3-phosphate + dihydroxyacetone phosphate. It functions in the pathway carbohydrate degradation; glycolysis; D-glyceraldehyde 3-phosphate and glycerone phosphate from D-glucose: step 4/4. The polypeptide is Fructose-bisphosphate aldolase 2 (aldo-2) (Caenorhabditis elegans).